Consider the following 151-residue polypeptide: Arginine repressor (151 aa).

The protein belongs to the ArgR family.

It localises to the cytoplasm. It functions in the pathway amino-acid biosynthesis; L-arginine biosynthesis [regulation]. In terms of biological role, regulates arginine biosynthesis genes. The protein is Arginine repressor of Heliobacterium modesticaldum (strain ATCC 51547 / Ice1).